The sequence spans 63 residues: Large ribosomal subunit protein bL35 (63 aa).

The interval Arg24–Leu44 is disordered.

Belongs to the bacterial ribosomal protein bL35 family.

This chain is Large ribosomal subunit protein bL35, found in Mycoplasma mycoides subsp. mycoides SC (strain CCUG 32753 / NCTC 10114 / PG1).